A 200-amino-acid polypeptide reads, in one-letter code: Probable molybdenum cofactor guanylyltransferase (200 aa).

GTP contacts are provided by residues 9–11 (LAG), lysine 21, aspartate 69, and aspartate 100. Position 100 (aspartate 100) interacts with Mg(2+).

It belongs to the MobA family. It depends on Mg(2+) as a cofactor.

The protein resides in the cytoplasm. It carries out the reaction Mo-molybdopterin + GTP + H(+) = Mo-molybdopterin guanine dinucleotide + diphosphate. In terms of biological role, transfers a GMP moiety from GTP to Mo-molybdopterin (Mo-MPT) cofactor (Moco or molybdenum cofactor) to form Mo-molybdopterin guanine dinucleotide (Mo-MGD) cofactor. This is Probable molybdenum cofactor guanylyltransferase from Bacillus cereus (strain B4264).